A 166-amino-acid chain; its full sequence is Large ribosomal subunit protein uL10 (166 aa).

The protein belongs to the universal ribosomal protein uL10 family. As to quaternary structure, part of the ribosomal stalk of the 50S ribosomal subunit. The N-terminus interacts with L11 and the large rRNA to form the base of the stalk. The C-terminus forms an elongated spine to which L12 dimers bind in a sequential fashion forming a multimeric L10(L12)X complex.

Its function is as follows. Forms part of the ribosomal stalk, playing a central role in the interaction of the ribosome with GTP-bound translation factors. This chain is Large ribosomal subunit protein uL10, found in Streptococcus gordonii (strain Challis / ATCC 35105 / BCRC 15272 / CH1 / DL1 / V288).